Consider the following 649-residue polypeptide: Choline transporter-like protein 3 (649 aa).

Residues A33 to V53 traverse the membrane as a helical segment. Residues N136 and N151 are each glycosylated (N-linked (GlcNAc...) asparagine). Helical transmembrane passes span D213–F233, F235–V255, L284–V304, L334–L354, and L384–G404. Residues N414, N502, and N520 are each glycosylated (N-linked (GlcNAc...) asparagine). Helical transmembrane passes span F533 to A553 and V562 to L582.

It belongs to the CTL (choline transporter-like) family.

It is found in the membrane. This chain is Choline transporter-like protein 3 (SLC44A3), found in Bos taurus (Bovine).